The chain runs to 321 residues: Cytochrome c biogenesis protein CcsA (321 aa).

Helical transmembrane passes span 17–37 (IISI…IVGI), 43–63 (KGII…WIYS), 143–163 (MLLS…FLVI), 225–245 (VISL…VWAN), 258–275 (ETWA…LHTR), and 287–307 (IVAS…NLLG).

This sequence belongs to the CcmF/CycK/Ccl1/NrfE/CcsA family. As to quaternary structure, may interact with Ccs1.

It is found in the plastid. The protein localises to the chloroplast thylakoid membrane. Functionally, required during biogenesis of c-type cytochromes (cytochrome c6 and cytochrome f) at the step of heme attachment. The protein is Cytochrome c biogenesis protein CcsA of Drimys granadensis.